The following is a 507-amino-acid chain: tRNA-2-methylthio-N(6)-dimethylallyladenosine synthase (507 aa).

The 117-residue stretch at 13–129 (RTYQVRTYGC…LPALLERARH (117 aa)) folds into the MTTase N-terminal domain. Residues Cys-22, Cys-58, Cys-92, Cys-166, Cys-170, and Cys-173 each contribute to the [4Fe-4S] cluster site. The Radical SAM core domain maps to 152-388 (RESAYAAWVS…IALQESVTLE (237 aa)). The TRAM domain maps to 391 to 462 (QKQIGRMIEV…PHHLIADDGV (72 aa)). The segment covering 459-478 (DDGVRSHRRTRAGDAHEAGK) has biased composition (basic and acidic residues). A disordered region spans residues 459 to 492 (DDGVRSHRRTRAGDAHEAGKKPSTPGIGLGMPAI).

This sequence belongs to the methylthiotransferase family. MiaB subfamily. As to quaternary structure, monomer. It depends on [4Fe-4S] cluster as a cofactor.

Its subcellular location is the cytoplasm. The enzyme catalyses N(6)-dimethylallyladenosine(37) in tRNA + (sulfur carrier)-SH + AH2 + 2 S-adenosyl-L-methionine = 2-methylsulfanyl-N(6)-dimethylallyladenosine(37) in tRNA + (sulfur carrier)-H + 5'-deoxyadenosine + L-methionine + A + S-adenosyl-L-homocysteine + 2 H(+). Catalyzes the methylthiolation of N6-(dimethylallyl)adenosine (i(6)A), leading to the formation of 2-methylthio-N6-(dimethylallyl)adenosine (ms(2)i(6)A) at position 37 in tRNAs that read codons beginning with uridine. In Mycobacteroides abscessus (strain ATCC 19977 / DSM 44196 / CCUG 20993 / CIP 104536 / JCM 13569 / NCTC 13031 / TMC 1543 / L948) (Mycobacterium abscessus), this protein is tRNA-2-methylthio-N(6)-dimethylallyladenosine synthase.